Reading from the N-terminus, the 213-residue chain is Superoxide dismutase [Fe] (213 aa).

Fe cation is bound by residues His26, His73, Asp156, and His160.

Belongs to the iron/manganese superoxide dismutase family. In terms of assembly, homodimer. Requires Fe cation as cofactor.

It catalyses the reaction 2 superoxide + 2 H(+) = H2O2 + O2. Functionally, destroys superoxide anion radicals which are normally produced within the cells and which are toxic to biological systems. The sequence is that of Superoxide dismutase [Fe] (sodB) from Helicobacter pylori (strain J99 / ATCC 700824) (Campylobacter pylori J99).